Here is a 512-residue protein sequence, read N- to C-terminus: Flavonoid 3'-monooxygenase (512 aa).

A helical transmembrane segment spans residues 1–21 (MEILSLILYTVIFSFLLQFIL). The Cytoplasmic portion of the chain corresponds to 22-512 (RSFFRKRYPL…PRLEAQAYIG (491 aa)). Position 447 (C447) interacts with heme.

Belongs to the cytochrome P450 family. Requires heme as cofactor. In terms of tissue distribution, high expression in petals and ovaries and to a lower extent in sepals, pedicels, anthers and stems. Not detected in leaves, style or roots.

The protein resides in the endoplasmic reticulum membrane. The enzyme catalyses a 3'-unsubstituted flavone + reduced [NADPH--hemoprotein reductase] + O2 = a 3'-hydroxyflavone + oxidized [NADPH--hemoprotein reductase] + H2O + H(+). The protein operates within secondary metabolite biosynthesis; flavonoid biosynthesis. Functionally, catalyzes the 3'-hydroxylation of the flavonoid B-ring to the 3',4'-hydroxylated state. Convert naringenin to eriodictyol and dihydrokaempferol to dihydroquercetin. This is Flavonoid 3'-monooxygenase (CYP75B2) from Petunia hybrida (Petunia).